The chain runs to 193 residues: Holliday junction branch migration complex subunit RuvA (193 aa).

The tract at residues 1–63 (MIGKLTGTVT…ENINKLYGFE (63 aa)) is domain I. The tract at residues 64–148 (CRKSQEVARM…GIASSTNVHI (85 aa)) is domain II. Residues 149–150 (AS) are flexible linker. Residues 150–193 (SEAVSALVKLGFQHKPSHKVVMEIMTKRPAIEIAELITLALKML) form a domain III region.

It belongs to the RuvA family. In terms of assembly, homotetramer. Forms an RuvA(8)-RuvB(12)-Holliday junction (HJ) complex. HJ DNA is sandwiched between 2 RuvA tetramers; dsDNA enters through RuvA and exits via RuvB. An RuvB hexamer assembles on each DNA strand where it exits the tetramer. Each RuvB hexamer is contacted by two RuvA subunits (via domain III) on 2 adjacent RuvB subunits; this complex drives branch migration. In the full resolvosome a probable DNA-RuvA(4)-RuvB(12)-RuvC(2) complex forms which resolves the HJ.

The protein localises to the cytoplasm. Functionally, the RuvA-RuvB-RuvC complex processes Holliday junction (HJ) DNA during genetic recombination and DNA repair, while the RuvA-RuvB complex plays an important role in the rescue of blocked DNA replication forks via replication fork reversal (RFR). RuvA specifically binds to HJ cruciform DNA, conferring on it an open structure. The RuvB hexamer acts as an ATP-dependent pump, pulling dsDNA into and through the RuvAB complex. HJ branch migration allows RuvC to scan DNA until it finds its consensus sequence, where it cleaves and resolves the cruciform DNA. The polypeptide is Holliday junction branch migration complex subunit RuvA (Neorickettsia sennetsu (strain ATCC VR-367 / Miyayama) (Ehrlichia sennetsu)).